We begin with the raw amino-acid sequence, 317 residues long: tRNA dimethylallyltransferase (317 aa).

14–21 (GPTASGKT) contacts ATP. 16–21 (TASGKT) is a substrate binding site. Interaction with substrate tRNA regions lie at residues 39-42 (DSAL), 163-167 (QRIQR), and 248-253 (RCVGYR).

The protein belongs to the IPP transferase family. Monomer. Requires Mg(2+) as cofactor.

It catalyses the reaction adenosine(37) in tRNA + dimethylallyl diphosphate = N(6)-dimethylallyladenosine(37) in tRNA + diphosphate. In terms of biological role, catalyzes the transfer of a dimethylallyl group onto the adenine at position 37 in tRNAs that read codons beginning with uridine, leading to the formation of N6-(dimethylallyl)adenosine (i(6)A). This chain is tRNA dimethylallyltransferase, found in Paraburkholderia phymatum (strain DSM 17167 / CIP 108236 / LMG 21445 / STM815) (Burkholderia phymatum).